Consider the following 463-residue polypeptide: Chromosomal replication initiator protein DnaA (463 aa).

The interval 1–84 is domain I, interacts with DnaA modulators; sequence MNTNQIILTN…QLFQHYNNAI (84 aa). The interval 84 to 124 is domain II; sequence IKTVEIITKELPASNQATLELPTKTFADIGSSELNSENIFS. A domain III, AAA+ region region spans residues 125–343; that stretch reads TFDIRFTFDN…GALNKVIAHS (219 aa). Positions 171, 173, 174, and 175 each coordinate ATP. Positions 344–463 are domain IV, binds dsDNA; sequence NFTAKEITLE…INLMMKILQN (120 aa).

Belongs to the DnaA family. As to quaternary structure, oligomerizes as a right-handed, spiral filament on DNA at oriC.

The protein resides in the cytoplasm. In terms of biological role, plays an essential role in the initiation and regulation of chromosomal replication. ATP-DnaA binds to the origin of replication (oriC) to initiate formation of the DNA replication initiation complex once per cell cycle. Binds the DnaA box (a 9 base pair repeat at the origin) and separates the double-stranded (ds)DNA. Forms a right-handed helical filament on oriC DNA; dsDNA binds to the exterior of the filament while single-stranded (ss)DNA is stabiized in the filament's interior. The ATP-DnaA-oriC complex binds and stabilizes one strand of the AT-rich DNA unwinding element (DUE), permitting loading of DNA polymerase. After initiation quickly degrades to an ADP-DnaA complex that is not apt for DNA replication. Binds acidic phospholipids. This chain is Chromosomal replication initiator protein DnaA, found in Rickettsia bellii (strain RML369-C).